A 161-amino-acid chain; its full sequence is Peroxynitrite isomerase 2 (161 aa).

Positions 17 to 23 (GTWAGQG) match the GXWXGXG motif. A heme b-binding site is contributed by H152.

The protein belongs to the nitrobindin family. As to quaternary structure, homodimer. Heme b serves as cofactor.

The catalysed reaction is peroxynitrite = nitrate. Its pathway is nitrogen metabolism. Its function is as follows. Heme-binding protein able to scavenge peroxynitrite and to protect free L-tyrosine against peroxynitrite-mediated nitration, by acting as a peroxynitrite isomerase that converts peroxynitrite to nitrate. Therefore, this protein likely plays a role in peroxynitrite sensing and in the detoxification of reactive nitrogen and oxygen species (RNS and ROS, respectively). Is able to bind nitric oxide (NO) in vitro, but may act as a sensor of peroxynitrite levels in vivo. This is Peroxynitrite isomerase 2 from Mycobacterium ulcerans (strain Agy99).